Reading from the N-terminus, the 153-residue chain is NAD(P)H-quinone oxidoreductase subunit N (153 aa).

This sequence belongs to the complex I NdhN subunit family. In terms of assembly, NDH-1 can be composed of about 15 different subunits; different subcomplexes with different compositions have been identified which probably have different functions.

It localises to the cellular thylakoid membrane. It catalyses the reaction a plastoquinone + NADH + (n+1) H(+)(in) = a plastoquinol + NAD(+) + n H(+)(out). The enzyme catalyses a plastoquinone + NADPH + (n+1) H(+)(in) = a plastoquinol + NADP(+) + n H(+)(out). NDH-1 shuttles electrons from an unknown electron donor, via FMN and iron-sulfur (Fe-S) centers, to quinones in the respiratory and/or the photosynthetic chain. The immediate electron acceptor for the enzyme in this species is believed to be plastoquinone. Couples the redox reaction to proton translocation, and thus conserves the redox energy in a proton gradient. Cyanobacterial NDH-1 also plays a role in inorganic carbon-concentration. The protein is NAD(P)H-quinone oxidoreductase subunit N of Prochlorococcus marinus (strain MIT 9303).